A 482-amino-acid polypeptide reads, in one-letter code: UDP-N-acetylmuramoyl-L-alanyl-D-glutamate--2,6-diaminopimelate ligase (482 aa).

A UDP-N-acetyl-alpha-D-muramoyl-L-alanyl-D-glutamate-binding site is contributed by S30. G111–T117 contributes to the ATP binding site. Residues T153–T154, S180, Q186, and R188 contribute to the UDP-N-acetyl-alpha-D-muramoyl-L-alanyl-D-glutamate site. N6-carboxylysine is present on K220. Residues R378, D402–R405, G455, and E459 each bind meso-2,6-diaminopimelate. The Meso-diaminopimelate recognition motif signature appears at D402–R405.

This sequence belongs to the MurCDEF family. MurE subfamily. Mg(2+) serves as cofactor. Post-translationally, carboxylation is probably crucial for Mg(2+) binding and, consequently, for the gamma-phosphate positioning of ATP.

It localises to the cytoplasm. It carries out the reaction UDP-N-acetyl-alpha-D-muramoyl-L-alanyl-D-glutamate + meso-2,6-diaminopimelate + ATP = UDP-N-acetyl-alpha-D-muramoyl-L-alanyl-gamma-D-glutamyl-meso-2,6-diaminopimelate + ADP + phosphate + H(+). Its pathway is cell wall biogenesis; peptidoglycan biosynthesis. Its function is as follows. Catalyzes the addition of meso-diaminopimelic acid to the nucleotide precursor UDP-N-acetylmuramoyl-L-alanyl-D-glutamate (UMAG) in the biosynthesis of bacterial cell-wall peptidoglycan. The polypeptide is UDP-N-acetylmuramoyl-L-alanyl-D-glutamate--2,6-diaminopimelate ligase (Bacteroides thetaiotaomicron (strain ATCC 29148 / DSM 2079 / JCM 5827 / CCUG 10774 / NCTC 10582 / VPI-5482 / E50)).